A 215-amino-acid chain; its full sequence is Probable phosphoglycerate mutase GpmB (215 aa).

Residues 8-15 (RHGETQWN), 21-22 (QG), arginine 58, lysine 60, 82-85 (ELDM), 104-105 (RR), and 151-152 (GI) contribute to the substrate site. Histidine 9 acts as the Tele-phosphohistidine intermediate in catalysis. The Proton donor/acceptor role is filled by glutamate 82.

The protein belongs to the phosphoglycerate mutase family. GpmB subfamily.

It carries out the reaction (2R)-2-phosphoglycerate = (2R)-3-phosphoglycerate. It participates in carbohydrate degradation; glycolysis; pyruvate from D-glyceraldehyde 3-phosphate: step 3/5. The sequence is that of Probable phosphoglycerate mutase GpmB from Salmonella agona (strain SL483).